The primary structure comprises 361 residues: tRNA/tmRNA (uracil-C(5))-methyltransferase (361 aa).

The S-adenosyl-L-methionine site is built by Q185, Y213, N218, E234, and D294. Catalysis depends on C319, which acts as the Nucleophile. E353 functions as the Proton acceptor in the catalytic mechanism.

It belongs to the class I-like SAM-binding methyltransferase superfamily. RNA M5U methyltransferase family. TrmA subfamily.

It catalyses the reaction uridine(54) in tRNA + S-adenosyl-L-methionine = 5-methyluridine(54) in tRNA + S-adenosyl-L-homocysteine + H(+). It carries out the reaction uridine(341) in tmRNA + S-adenosyl-L-methionine = 5-methyluridine(341) in tmRNA + S-adenosyl-L-homocysteine + H(+). Its function is as follows. Dual-specificity methyltransferase that catalyzes the formation of 5-methyluridine at position 54 (m5U54) in all tRNAs, and that of position 341 (m5U341) in tmRNA (transfer-mRNA). This chain is tRNA/tmRNA (uracil-C(5))-methyltransferase, found in Pseudomonas entomophila (strain L48).